An 846-amino-acid chain; its full sequence is MMKHPFSNNHIINGNNNNNNLINGKVGIFWNLFETPLPIQQYSISHILNQLKFYANSLGYIKQFTIISDISNAGNSVTPSTYNIIKQEISQFGGIQYFEIFQSDRSELVSKIWEFIFDNYHEVSNGLHIILVDRFANDSPIIKPLTMRGIKISTLVSPVPTFHNQNQNNNNQNNNQNNNNNNNNNNNNNNNNNNNNNNNSQNNNNNQNNNNNHINHINQNINNVSNETHSFFSENINYSLNPYSDDLSYNGNGCNLNGNNNNNNNNNNNNNNSNSNSNIVIVTQMSSPILSHHNQNNQNNLSGLHFNSLSSYGNNSNPINNGQQSQIHHNINKLNLNNPPPPSNPLTSGLSYSPLQSPNSQSLANSSANISSNALNQSSSSQQQQPQSTSQQQQQQHKMNSSSGNISPPLPLSISLGLCRGGSSNISPLPSPSLSSSSSGSALSPATLTLIMPSTFQSGSSITPKNLSPLSSSAPNTPKQFASLSSSSSPSSSTSSSSNSLLNNGVLSHSLSSLLSLSQPPTQQQQIQQLHIQQLQQQQQQQQQQQQQQQQQQQQQQQQQQQHHHHQQQQQQSPPQNQKNNQQNQNQNQNQNQNQNQNQNQNQNQNQNQNQNQNQNQNQNQNQNQNQNQNQQNQHQQNQPNNIKFPSNFNDNTTLQNLYTVIQGLKEDGFKPTFKVILPRLGAMMGMRVHRSHFEKILEKAKTHSFNIDYTTKTIYYKDDNFGGADPHKAEKCHFTEEEIQELVDLIETTQIKVFPSRYNMVMWVTSQNLPLISKLKQGQIVELCQITINENIVSLDENLKKTTTTTEPQNNNNNNNNNNNNNNNNNNNNNNNNNNNNNNNNNKNK.

Disordered stretches follow at residues 159–217 (VPTF…INHI), 254–276 (CNLN…SNSN), 332–414 (NKLN…PLSI), 459–501 (GSSI…SNSL), 556–651 (QQQQ…NFND), and 803–846 (TTTT…NKNK). Over residues 163-217 (HNQNQNNNNQNNNQNNNNNNNNNNNNNNNNNNNNNNNSQNNNNNQNNNNNHINHI) the composition is skewed to low complexity. Low complexity predominate over residues 355–414 (LQSPNSQSLANSSANISSNALNQSSSSQQQQPQSTSQQQQQQHKMNSSSGNISPPLPLSI). Residues 459 to 482 (GSSITPKNLSPLSSSAPNTPKQFA) show a composition bias toward polar residues. Composition is skewed to low complexity over residues 483 to 501 (SLSS…SNSL), 568 to 642 (QQQQ…QPNN), and 811 to 846 (NNNN…NKNK).

This is an uncharacterized protein from Dictyostelium discoideum (Social amoeba).